The chain runs to 426 residues: Monocarboxylate transporter 13 (426 aa).

The Cytoplasmic segment spans residues 1 to 10; it reads MAYRAEPPDG. The next 12 helical transmembrane spans lie at 11 to 31, 52 to 72, 83 to 103, 106 to 126, 139 to 159, 172 to 192, 221 to 241, 244 to 264, 283 to 303, 306 to 326, 338 to 358, and 374 to 394; these read GWGW…FGVL, VSWI…VGSA, VMTG…ATSL, LYLS…TPTL, LAMG…APLF, LLLV…LRPL, VALT…VAHL, LGWD…SDLV, LLML…VAEA, GLVA…PVAF, IYCG…LGAP, and FVVA…LPHF. At 395–426 the chain is on the cytoplasmic side; the sequence is FCFSAPTSKPQDLVTEALDTKVPLPEEGLGED.

Belongs to the major facilitator superfamily. Monocarboxylate porter (TC 2.A.1.13) family.

It is found in the golgi apparatus membrane. It localises to the cell membrane. In terms of biological role, proton-linked monocarboxylate transporter. May catalyze the transport of monocarboxylates across the plasma membrane. This is Monocarboxylate transporter 13 (SLC16A13) from Bos taurus (Bovine).